We begin with the raw amino-acid sequence, 64 residues long: Large ribosomal subunit protein bL33c (64 aa).

Belongs to the bacterial ribosomal protein bL33 family.

The protein resides in the plastid. It is found in the organellar chromatophore. This is Large ribosomal subunit protein bL33c from Paulinella chromatophora.